The following is a 599-amino-acid chain: ATP-dependent zinc metalloprotease FtsH 3 (599 aa).

At 1–7 (MKYKKKN) the chain is on the cytoplasmic side. The chain crosses the membrane as a helical span at residues 8–28 (ILFITTIIVIYLAFLFNWLEI). Over 29–128 (GIFKPKGESI…PFSWLLSIFS (100 aa)) the chain is Extracellular. Residues 129–149 (ILLNFINVLSSLVFTIYIFLA) form a helical membrane-spanning segment. Over 150–599 (IHRESGKLNS…IEQLVVNTKK (450 aa)) the chain is Cytoplasmic. 214 to 221 (GPPGTGKT) contributes to the ATP binding site. His-436 is a Zn(2+) binding site. Residue Glu-437 is part of the active site. Residues His-440 and Asp-512 each coordinate Zn(2+).

It in the central section; belongs to the AAA ATPase family. This sequence in the C-terminal section; belongs to the peptidase M41 family. In terms of assembly, homohexamer. Zn(2+) serves as cofactor.

It is found in the cell membrane. In terms of biological role, acts as a processive, ATP-dependent zinc metallopeptidase for both cytoplasmic and membrane proteins. Plays a role in the quality control of integral membrane proteins. The chain is ATP-dependent zinc metalloprotease FtsH 3 from Phytoplasma mali (strain AT).